We begin with the raw amino-acid sequence, 150 residues long: Transcriptional repressor NrdR (150 aa).

The segment at 3 to 34 (CPFCHHPQSRVIDSRTVENGFVTRRRRQCTKC) is a zinc-finger region. Residues 46-136 (LLVEKRNGVT…VYKSFSSMED (91 aa)) enclose the ATP-cone domain.

The protein belongs to the NrdR family. Zn(2+) is required as a cofactor.

In terms of biological role, negatively regulates transcription of bacterial ribonucleotide reductase nrd genes and operons by binding to NrdR-boxes. This Corynebacterium kroppenstedtii (strain DSM 44385 / JCM 11950 / CIP 105744 / CCUG 35717) protein is Transcriptional repressor NrdR.